Here is a 93-residue protein sequence, read N- to C-terminus: Putative pterin-4-alpha-carbinolamine dehydratase (93 aa).

The protein belongs to the pterin-4-alpha-carbinolamine dehydratase family.

It catalyses the reaction (4aS,6R)-4a-hydroxy-L-erythro-5,6,7,8-tetrahydrobiopterin = (6R)-L-erythro-6,7-dihydrobiopterin + H2O. This chain is Putative pterin-4-alpha-carbinolamine dehydratase, found in Trichodesmium erythraeum (strain IMS101).